A 496-amino-acid chain; its full sequence is Nectin 1a (496 aa).

The N-terminal stretch at 1–20 is a signal peptide; the sequence is MMFINLLLRLMCVFLIGADG. The Extracellular portion of the chain corresponds to 21–349; the sequence is QMVQMESSKA…FQDQQQAGVV (329 aa). The 105-residue stretch at 34–138 folds into the Ig-like V-type domain; that stretch reads GSQVELPCQF…GNRENMVNLT (105 aa). The cysteines at positions 41 and 121 are disulfide-linked. 2 N-linked (GlcNAc...) asparagine glycosylation sites follow: N62 and N136. Ig-like C2-type domains are found at residues 143-238 and 243-330; these read PMIQ…VTLN and PEVI…VIVT. 2 disulfide bridges follow: C168–C222 and C265–C312. An N-linked (GlcNAc...) asparagine glycan is attached at N282. The helical transmembrane segment at 350–370 threads the bilayer; it reads IGGAVVCGTVLLAAVTLLVVF. At 371-496 the chain is on the cytoplasmic side; sequence LYRRRCMFKG…SVISKEEWYV (126 aa).

The protein belongs to the nectin family. In terms of assembly, cis- and trans-homodimer. Can form trans-heterodimers. In terms of tissue distribution, expressed in the developing eye and nervous system.

The protein resides in the cell membrane. It localises to the cell junction. The protein localises to the adherens junction. Functionally, cell adhesion molecule that promotes cell-cell contacts and plays important roles in the development of the nervous system. Acts by forming homophilic or heterophilic trans-dimers. In Danio rerio (Zebrafish), this protein is Nectin 1a.